The chain runs to 360 residues: NAD(P)H-quinone oxidoreductase subunit 1, chloroplastic (360 aa).

8 helical membrane-spanning segments follow: residues 27 to 47 (IWIFVPIFSLVLGIITGVLVI), 98 to 118 (FSIGPSIAVISILLSYSIIPF), 129 to 149 (IGIFLWIAISSIAPIGLLMSG), 165 to 185 (AAQSISYEIPLTLCVLSISLL), 203 to 223 (FWGWNLWRQPIGFIIFLISSL), 253 to 273 (FGLFYVASYLNLLISSLFVTV), 297 to 317 (IFGTTIGIFITLAKTYLFLFI), and 340 to 360 (FLLPISLGNLLLTTSFQLFSL).

The protein belongs to the complex I subunit 1 family. In terms of assembly, NDH is composed of at least 16 different subunits, 5 of which are encoded in the nucleus.

The protein resides in the plastid. The protein localises to the chloroplast thylakoid membrane. The enzyme catalyses a plastoquinone + NADH + (n+1) H(+)(in) = a plastoquinol + NAD(+) + n H(+)(out). The catalysed reaction is a plastoquinone + NADPH + (n+1) H(+)(in) = a plastoquinol + NADP(+) + n H(+)(out). Functionally, NDH shuttles electrons from NAD(P)H:plastoquinone, via FMN and iron-sulfur (Fe-S) centers, to quinones in the photosynthetic chain and possibly in a chloroplast respiratory chain. The immediate electron acceptor for the enzyme in this species is believed to be plastoquinone. Couples the redox reaction to proton translocation, and thus conserves the redox energy in a proton gradient. The chain is NAD(P)H-quinone oxidoreductase subunit 1, chloroplastic from Lobularia maritima (Sweet alyssum).